The sequence spans 181 residues: Secreted chorismate mutase (181 aa).

The signal sequence occupies residues 1 to 20 (MLASVALAALAGVGTPHATA). In terms of domain architecture, Chorismate mutase spans 21 to 100 (DDASPLVPLV…ATSSVEHTRF (80 aa)). Substrate contacts are provided by residues arginine 36, lysine 47, aspartate 56, 59 to 63 (REQQV), 92 to 96 (TSSVE), and arginine 121. Cysteine 147 and cysteine 180 form a disulfide bridge.

Homodimer.

It is found in the secreted. It carries out the reaction chorismate = prephenate. The protein operates within metabolic intermediate biosynthesis; prephenate biosynthesis; prephenate from chorismate: step 1/1. In terms of biological role, catalyzes the Claisen rearrangement of chorismate to prephenate. May play some role in the pathogenicity. This chain is Secreted chorismate mutase, found in Mycolicibacterium smegmatis (strain ATCC 700084 / mc(2)155) (Mycobacterium smegmatis).